Consider the following 182-residue polypeptide: Ribosome-recycling factor (182 aa).

The protein belongs to the RRF family.

It is found in the cytoplasm. Functionally, responsible for the release of ribosomes from messenger RNA at the termination of protein biosynthesis. May increase the efficiency of translation by recycling ribosomes from one round of translation to another. This is Ribosome-recycling factor from Cyanothece sp. (strain PCC 7425 / ATCC 29141).